A 133-amino-acid chain; its full sequence is Large ribosomal subunit protein bL20 (133 aa).

The protein belongs to the bacterial ribosomal protein bL20 family.

Binds directly to 23S ribosomal RNA and is necessary for the in vitro assembly process of the 50S ribosomal subunit. It is not involved in the protein synthesizing functions of that subunit. The chain is Large ribosomal subunit protein bL20 from Rubrobacter xylanophilus (strain DSM 9941 / JCM 11954 / NBRC 16129 / PRD-1).